We begin with the raw amino-acid sequence, 56 residues long: U-megalopygitoxin(2)-Mo9 (56 aa).

A signal peptide spans 1–25 (MKFIVLLLIVTSVLMMFAVTTEASP). Gln-26 carries the pyrrolidone carboxylic acid modification. Thr-55 is modified (threonine amide).

The protein belongs to the caterpillar 2 family. Post-translationally, contains 2 disulfide bonds. As to expression, expressed by the venom apparatus.

The protein resides in the secreted. Its function is as follows. Probable toxin. The polypeptide is U-megalopygitoxin(2)-Mo9 (Megalopyge opercularis (Southern flannel moth)).